Here is a 478-residue protein sequence, read N- to C-terminus: uncharacterized protein (478 aa).

Residues 174–366 enclose the ATP-grasp domain; sequence RQVLAAAGVP…LIGEHIKLAI (193 aa). 214-219 serves as a coordination point for ATP; the sequence is GSGSRG. Arg-339 is an active-site residue.

This is an uncharacterized protein from Sinorhizobium fredii (strain NBRC 101917 / NGR234).